Reading from the N-terminus, the 588-residue chain is Calcium/calmodulin-dependent protein kinase kinase 2 (588 aa).

Over residues 1–14 the composition is skewed to polar residues; the sequence is MSSCVSSQPSSNRA. Disordered stretches follow at residues 1-33 and 78-100; these read MSSCVSSQPSSNRAAPQDELGGRGSSSSESQKP and GQEVPLDTSGSQARPHLSGRKLS. Ser2 carries the post-translational modification N-acetylserine. Phosphoserine is present on residues Ser100, Ser114, Ser129, Ser133, and Ser137. A compositionally biased stretch (low complexity) spans 128–139; the sequence is YSPVSSPQSSPR. The interval 128–149 is disordered; sequence YSPVSSPQSSPRLPRRPTVESH. The 282-residue stretch at 165-446 folds into the Protein kinase domain; the sequence is YTLKDEIGKG…VPEIKLHPWV (282 aa). Residues 171-179 and Lys194 contribute to the ATP site; that span reads IGKGSYGVV. The tract at residues 204 to 226 is RP domain; it reads QAGFPRRPPPRGTRPAPGGCIQP. The segment at 205-225 is disordered; that stretch reads AGFPRRPPPRGTRPAPGGCIQ. Asp312 serves as the catalytic Proton acceptor. An autoinhibitory domain region spans residues 472–477; that stretch reads ENSVKH. Residues 475–500 form a calmodulin-binding region; the sequence is VKHIPSLATVILVKTMIRKRSFGNPF. Pro479, Ser495, Ser511, Thr522, and Ser572 each carry phosphoserine. The disordered stretch occupies residues 497 to 588; the sequence is GNPFEGSRRE…LRPEEAMEPE (92 aa). Residues 521–536 show a composition bias toward basic and acidic residues; that stretch reads PTRECESLSELKEARQ. Positions 579-588 are enriched in basic and acidic residues; sequence LRPEEAMEPE.

Belongs to the protein kinase superfamily. Ser/Thr protein kinase family. Interacts with calmodulin. Autophosphorylated and phosphorylated by PKA. Each isoform may show a different pattern of phosphorylation. As to expression, ubiquitously expressed with higher levels in the brain. Intermediate levels are detected in spleen, prostate, thyroid and leukocytes. The lowest level is in lung.

It localises to the nucleus. The protein localises to the cytoplasm. It is found in the cell projection. Its subcellular location is the neuron projection. The enzyme catalyses L-seryl-[protein] + ATP = O-phospho-L-seryl-[protein] + ADP + H(+). It carries out the reaction L-threonyl-[protein] + ATP = O-phospho-L-threonyl-[protein] + ADP + H(+). Activated by Ca(2+)/calmodulin. Binding of calmodulin may relieve intrasteric autoinhibition. Autophosphorylation does not alter activity or regulation by Ca(2+)/calmodulin. In part, activity is independent on Ca(2+)/calmodulin. In terms of biological role, calcium/calmodulin-dependent protein kinase belonging to a proposed calcium-triggered signaling cascade involved in a number of cellular processes. Isoform 1, isoform 2 and isoform 3 phosphorylate CAMK1 and CAMK4. Isoform 3 phosphorylates CAMK1D. Isoform 4, isoform 5 and isoform 6 lacking part of the calmodulin-binding domain are inactive. Efficiently phosphorylates 5'-AMP-activated protein kinase (AMPK) trimer, including that consisting of PRKAA1, PRKAB1 and PRKAG1. This phosphorylation is stimulated in response to Ca(2+) signals. Seems to be involved in hippocampal activation of CREB1. May play a role in neurite growth. Isoform 3 may promote neurite elongation, while isoform 1 may promoter neurite branching. The chain is Calcium/calmodulin-dependent protein kinase kinase 2 (CAMKK2) from Homo sapiens (Human).